We begin with the raw amino-acid sequence, 142 residues long: Peptidyl-prolyl cis-trans isomerase FKBP2 (142 aa).

Positions 1–21 (MRLSWFRVLTVLSICLSAVAT) are cleaved as a signal peptide. A PPIase FKBP-type domain is found at 49–137 (GDVLHMHYTG…VFEVELLKIE (89 aa)). The short motif at 139–142 (RTEL) is the Prevents secretion from ER element.

Belongs to the FKBP-type PPIase family. FKBP2 subfamily. In terms of assembly, interacts with ARFGEF1/BIG1 and the C-terminal of EPB41L2. In terms of tissue distribution, T-cells and thymus.

The protein resides in the endoplasmic reticulum membrane. The catalysed reaction is [protein]-peptidylproline (omega=180) = [protein]-peptidylproline (omega=0). Inhibited by both FK506 and rapamycin. Functionally, PPIases accelerate the folding of proteins. It catalyzes the cis-trans isomerization of proline imidic peptide bonds in oligopeptides. The chain is Peptidyl-prolyl cis-trans isomerase FKBP2 (FKBP2) from Homo sapiens (Human).